A 101-amino-acid polypeptide reads, in one-letter code: NADH-quinone oxidoreductase subunit K (101 aa).

The next 3 membrane-spanning stretches (helical) occupy residues 4–24, 30–50, and 61–81; these read LTHYLVLAAVMFAISVLGIFL, IVLLMAIELMLLAVNFNFIAF, and IFVFFVLTVAAAESAIGLAIL.

This sequence belongs to the complex I subunit 4L family. In terms of assembly, NDH-1 is composed of 14 different subunits. Subunits NuoA, H, J, K, L, M, N constitute the membrane sector of the complex.

It localises to the cell inner membrane. It carries out the reaction a quinone + NADH + 5 H(+)(in) = a quinol + NAD(+) + 4 H(+)(out). Functionally, NDH-1 shuttles electrons from NADH, via FMN and iron-sulfur (Fe-S) centers, to quinones in the respiratory chain. The immediate electron acceptor for the enzyme in this species is believed to be ubiquinone. Couples the redox reaction to proton translocation (for every two electrons transferred, four hydrogen ions are translocated across the cytoplasmic membrane), and thus conserves the redox energy in a proton gradient. The protein is NADH-quinone oxidoreductase subunit K of Laribacter hongkongensis (strain HLHK9).